The sequence spans 183 residues: Adenine phosphoribosyltransferase (183 aa).

It belongs to the purine/pyrimidine phosphoribosyltransferase family. In terms of assembly, homodimer.

Its subcellular location is the cytoplasm. It catalyses the reaction AMP + diphosphate = 5-phospho-alpha-D-ribose 1-diphosphate + adenine. It functions in the pathway purine metabolism; AMP biosynthesis via salvage pathway; AMP from adenine: step 1/1. In terms of biological role, catalyzes a salvage reaction resulting in the formation of AMP, that is energically less costly than de novo synthesis. The polypeptide is Adenine phosphoribosyltransferase (Erwinia tasmaniensis (strain DSM 17950 / CFBP 7177 / CIP 109463 / NCPPB 4357 / Et1/99)).